Consider the following 523-residue polypeptide: Alanine aminotransferase 2 (523 aa).

Residues 1–25 (MQRAAALVRRGCGPRTPSSWGRSQS) form a disordered region. Ala-187, Ser-188, Tyr-216, Asn-271, and Ser-338 together coordinate pyridoxal 5'-phosphate. Position 341 is an N6-(pyridoxal phosphate)lysine (Lys-341). Arg-350 is a binding site for pyridoxal 5'-phosphate. Residues Lys-415, Lys-505, and Lys-512 each carry the N6-acetyllysine modification.

The protein belongs to the class-I pyridoxal-phosphate-dependent aminotransferase family. Alanine aminotransferase subfamily. As to quaternary structure, homodimer. Requires pyridoxal 5'-phosphate as cofactor. As to expression, expressed at high levels in muscle, adipose tissue, kidney and brain and at lower levels in the liver and breast.

It catalyses the reaction L-alanine + 2-oxoglutarate = pyruvate + L-glutamate. It participates in amino-acid degradation; L-alanine degradation via transaminase pathway; pyruvate from L-alanine: step 1/1. Functionally, catalyzes the reversible transamination between alanine and 2-oxoglutarate to form pyruvate and glutamate. The protein is Alanine aminotransferase 2 (GPT2) of Homo sapiens (Human).